The sequence spans 344 residues: Arginine N-succinyltransferase (344 aa).

Leu125 is a binding site for succinyl-CoA. His229 (proton donor) is an active-site residue.

The protein belongs to the arginine N-succinyltransferase family.

The catalysed reaction is succinyl-CoA + L-arginine = N(2)-succinyl-L-arginine + CoA + H(+). It functions in the pathway amino-acid degradation; L-arginine degradation via AST pathway; L-glutamate and succinate from L-arginine: step 1/5. In terms of biological role, catalyzes the transfer of succinyl-CoA to arginine to produce N(2)-succinylarginine. This is Arginine N-succinyltransferase from Citrobacter koseri (strain ATCC BAA-895 / CDC 4225-83 / SGSC4696).